The following is a 263-amino-acid chain: ATP synthase subunit a (263 aa).

Positions 1–14 (MYLNNNNNMKYYIN) are cleaved as a propeptide — removed in mature form. 6 helical membrane passes run 35–57 (FSFINITNFGLYTMITLLVILTM), 95–117 (VWGYYFPLVYTFFITIFTMNLIS), 129–151 (VVFVVSMSMIIWLGTTIIGFYTH), 156–178 (FGLFLPTGTPLILVPLLVSIELL), 191–213 (LSANIMAGHLLIVILGGLLFNLM), and 228–250 (IAILGIVCLEFAITIIQAYVWCI).

This sequence belongs to the ATPase A chain family. As to quaternary structure, F-type ATPases have 2 components, CF(1) - the catalytic core - and CF(0) - the membrane proton channel. In yeast, the dimeric form of ATP synthase consists of 18 polypeptides: alpha, beta, gamma, delta, epsilon, 4 (B), 5 (OSCP), 6 (A), 8, 9 (C), d, E (Tim11), f, g, h, i, j and k.

It is found in the mitochondrion inner membrane. Functionally, mitochondrial membrane ATP synthase (F(1)F(0) ATP synthase or Complex V) produces ATP from ADP in the presence of a proton gradient across the membrane which is generated by electron transport complexes of the respiratory chain. F-type ATPases consist of two structural domains, F(1) - containing the extramembraneous catalytic core and F(0) - containing the membrane proton channel, linked together by a central stalk and a peripheral stalk. During catalysis, ATP synthesis in the catalytic domain of F(1) is coupled via a rotary mechanism of the central stalk subunits to proton translocation. Key component of the proton channel; it may play a direct role in the translocation of protons across the membrane. This is ATP synthase subunit a (ATP6) from Eremothecium gossypii (strain ATCC 10895 / CBS 109.51 / FGSC 9923 / NRRL Y-1056) (Yeast).